The chain runs to 2269 residues: Anaphase-promoting complex subunit 1 (2269 aa).

5 disordered regions span residues 305 to 334 (PSSN…QTIN), 379 to 433 (SSPP…QENS), 609 to 644 (NNNN…RKPL), 804 to 845 (KVYP…NNNN), and 1136 to 1197 (STAS…NSTS). Composition is skewed to low complexity over residues 306 to 334 (SSNA…QTIN), 379 to 430 (SSPP…QQQQ), 609 to 638 (NNNN…NNNN), 809 to 845 (NNNN…NNNN), and 1136 to 1159 (STAS…GQSN). A compositionally biased stretch (polar residues) spans 1160–1177 (GLPMNSTTNQMNSHQINN). PC repeat units lie at residues 1440–1472 (AALM…PIND) and 1483–1520 (TAGM…ISKE). A disordered region spans residues 1535 to 1586 (STPSISSNRNNNDLFNNGSNNNSSSNGGGGGGGGNNNGNNSNNGNNGSSQFK). The segment covering 1540 to 1559 (SSNRNNNDLFNNGSNNNSSS) has biased composition (low complexity). The span at 1560-1570 (NGGGGGGGGNN) shows a compositional bias: gly residues. The segment covering 1571-1583 (NGNNSNNGNNGSS) has biased composition (low complexity). PC repeat units lie at residues 1605–1637 (GAII…GLNY), 1722–1756 (GAAF…RQVY), and 1792–1807 (LVMA…KILR). Over residues 1960 to 1993 (NNNNNNNNNNNNNNNNNNNNNNNNNNNNNNNNNN) the composition is skewed to low complexity. A disordered region spans residues 1960–1997 (NNNNNNNNNNNNNNNNNNNNNNNNNNNNNNNNNNKNIL).

The protein belongs to the APC1 family. In terms of assembly, the APC/C is composed of at least 13 subunits that stay tightly associated throughout the cell cycle: anapc1, anapc2, anapc3, anapc4, anapc5, anapc6, anapc7, anapc8, anapc10, anapc11, cdc20, cdc26 and cdh1.

It localises to the nucleus. It functions in the pathway protein modification; protein ubiquitination. In terms of biological role, component of the anaphase promoting complex/cyclosome (APC/C), a cell cycle-regulated E3 ubiquitin-protein ligase complex that controls progression through mitosis and the G1 phase of the cell cycle. This is Anaphase-promoting complex subunit 1 (anapc1) from Dictyostelium discoideum (Social amoeba).